Reading from the N-terminus, the 618-residue chain is MFDLEYQLKNLPDKPGVYLMKNNLGEIIYVGKAKILKNRVRQYFQKSQKHSEKVKAMVKNIEEFEYIITDSEIEALILECNLIKKYRPKYNILLKDDKHYPFIKVTLAEDFPRVVSTRKVTKDGSKYFGPYVDGSSVKDIIELIKKTFPIRTCKKNIVEGAKAIRPCLNYQIGLCKAPCAQYIKKSEYREIIDDVIKLLSGKHLDIVENFKLNMEKAAENLEFEKAAMLRDKINIIEKIGEKQKIILNNFDNEDYISLYSDGKDTCFQVFFLRNGKIVGREHFIIEDTFDTNSSTLISNFLKEFYGGTAYIPKTIYVPNIEDEALLEQWLTLKKESKSTIKIPIKGEKKNILVLVEKNAKTTLENFKLKYLQEKALYDNVLKDLKNILRLQEEPIRIEAFDISNIQGFDSVGSMVVFEKGRAKPSDYRRFKINTVKGADDYKSMKEILTRRFQHGLSEIKSIQDRKLEFSSGKFSVFPDLILMDGGKGQINIALEVLNTFNIDIPVCGMVKDNKHRTRGLIYNGEEIIINKYGSVMKFITRVQDEVHRFAISYHRSLRGKNSFHSLLDDIPNIGEKRKKDLLFNFKSIDNIKKATYEELLSIPSMDKKSAECVLEFFK.

The region spanning 13-92 (DKPGVYLMKN…IKKYRPKYNI (80 aa)) is the GIY-YIG domain. In terms of domain architecture, UVR spans 204-239 (LDIVENFKLNMEKAAENLEFEKAAMLRDKINIIEKI).

This sequence belongs to the UvrC family. In terms of assembly, interacts with UvrB in an incision complex.

It is found in the cytoplasm. The UvrABC repair system catalyzes the recognition and processing of DNA lesions. UvrC both incises the 5' and 3' sides of the lesion. The N-terminal half is responsible for the 3' incision and the C-terminal half is responsible for the 5' incision. The protein is UvrABC system protein C of Clostridium botulinum (strain Kyoto / Type A2).